A 264-amino-acid chain; its full sequence is Fructose-1,6-bisphosphatase/inositol-1-monophosphatase (264 aa).

Glu-70, Asp-86, Leu-88, and Asp-89 together coordinate Mg(2+). Substrate contacts are provided by residues 89–91 (DGT), Arg-185, and Ala-190. Residue Asp-214 participates in Mg(2+) binding.

This sequence belongs to the inositol monophosphatase superfamily. FBPase class 4 family. Requires Mg(2+) as cofactor.

The catalysed reaction is beta-D-fructose 1,6-bisphosphate + H2O = beta-D-fructose 6-phosphate + phosphate. The enzyme catalyses a myo-inositol phosphate + H2O = myo-inositol + phosphate. In terms of biological role, phosphatase with broad specificity; it can dephosphorylate fructose 1,6-bisphosphate, and both D and L isomers of inositol-1-phosphate (I-1-P). The protein is Fructose-1,6-bisphosphatase/inositol-1-monophosphatase (suhB) of Aquifex aeolicus (strain VF5).